Consider the following 309-residue polypeptide: 4-hydroxy-tetrahydrodipicolinate synthase (309 aa).

Threonine 51 lines the pyruvate pocket. The active-site Proton donor/acceptor is the tyrosine 140. Lysine 168 functions as the Schiff-base intermediate with substrate in the catalytic mechanism. Isoleucine 209 serves as a coordination point for pyruvate.

It belongs to the DapA family. Homotetramer; dimer of dimers.

It is found in the cytoplasm. The catalysed reaction is L-aspartate 4-semialdehyde + pyruvate = (2S,4S)-4-hydroxy-2,3,4,5-tetrahydrodipicolinate + H2O + H(+). The protein operates within amino-acid biosynthesis; L-lysine biosynthesis via DAP pathway; (S)-tetrahydrodipicolinate from L-aspartate: step 3/4. Functionally, catalyzes the condensation of (S)-aspartate-beta-semialdehyde [(S)-ASA] and pyruvate to 4-hydroxy-tetrahydrodipicolinate (HTPA). This Streptococcus uberis (strain ATCC BAA-854 / 0140J) protein is 4-hydroxy-tetrahydrodipicolinate synthase.